The sequence spans 248 residues: Probable septum site-determining protein MinC (248 aa).

The tract at residues 94–125 (GMPPAMRGGQPAADFEAPAGEPQANPGAPEPQ) is disordered.

This sequence belongs to the MinC family. As to quaternary structure, interacts with MinD and FtsZ.

Cell division inhibitor that blocks the formation of polar Z ring septums. Rapidly oscillates between the poles of the cell to destabilize FtsZ filaments that have formed before they mature into polar Z rings. Prevents FtsZ polymerization. This is Probable septum site-determining protein MinC from Brucella abortus (strain S19).